We begin with the raw amino-acid sequence, 255 residues long: Hydroxyacylglutathione hydrolase (255 aa).

Positions 56, 58, 60, 61, 114, 133, and 171 each coordinate Zn(2+).

Belongs to the metallo-beta-lactamase superfamily. Glyoxalase II family. As to quaternary structure, monomer. Zn(2+) serves as cofactor.

It catalyses the reaction an S-(2-hydroxyacyl)glutathione + H2O = a 2-hydroxy carboxylate + glutathione + H(+). It functions in the pathway secondary metabolite metabolism; methylglyoxal degradation; (R)-lactate from methylglyoxal: step 2/2. In terms of biological role, thiolesterase that catalyzes the hydrolysis of S-D-lactoyl-glutathione to form glutathione and D-lactic acid. The polypeptide is Hydroxyacylglutathione hydrolase (Mesorhizobium japonicum (strain LMG 29417 / CECT 9101 / MAFF 303099) (Mesorhizobium loti (strain MAFF 303099))).